The primary structure comprises 338 residues: MGTDIGDLLLKDTIEIAGLSNKVVAIDAYNTLYQFLSIIRQRDGTPLKDSRGQITSHLSGILYRLTSLIEAGVKPIFVFDGKPPDFKSDTLAKRHEVRESATAKWEDAKAQGLEEEAYKYAQASSKVTREMIDDSVRLLELMGIPYVKAPSEGEAQASYMVQKGDADYIGSQDYDSFLFGAPQVVRNLTITGKRKLPKKNIYVDVKPEVLSLVDSLGELGITRQQLIDIAMCVGTDYNTGLENIGPKRALKLVKEHGDIKVVLKELGKDIEDLDAKRDFFMNPPVTDDYELKWIKPDRAGVIDLLCKKHDFSEERVNKALDRLEANIGGSQSTLDQWF.

An N-domain region spans residues 1-98 (MGTDIGDLLL…DTLAKRHEVR (98 aa)). Aspartate 27, aspartate 80, glutamate 152, glutamate 154, aspartate 173, aspartate 175, and aspartate 236 together coordinate Mg(2+). The interval 116–257 (EAYKYAQASS…RALKLVKEHG (142 aa)) is I-domain. An interaction with PCNA region spans residues 330–338 (SQSTLDQWF).

It belongs to the XPG/RAD2 endonuclease family. FEN1 subfamily. In terms of assembly, interacts with PCNA. PCNA stimulates the nuclease activity without altering cleavage specificity. Mg(2+) serves as cofactor.

Its function is as follows. Structure-specific nuclease with 5'-flap endonuclease and 5'-3' exonuclease activities involved in DNA replication and repair. During DNA replication, cleaves the 5'-overhanging flap structure that is generated by displacement synthesis when DNA polymerase encounters the 5'-end of a downstream Okazaki fragment. Binds the unpaired 3'-DNA end and kinks the DNA to facilitate 5' cleavage specificity. Cleaves one nucleotide into the double-stranded DNA from the junction in flap DNA, leaving a nick for ligation. Also involved in the base excision repair (BER) pathway. Acts as a genome stabilization factor that prevents flaps from equilibrating into structures that lead to duplications and deletions. Also possesses 5'-3' exonuclease activity on nicked or gapped double-stranded DNA. This chain is Flap endonuclease 1, found in Methanococcoides burtonii (strain DSM 6242 / NBRC 107633 / OCM 468 / ACE-M).